A 259-amino-acid polypeptide reads, in one-letter code: Factor V activator (259 aa).

A signal peptide spans 1 to 18 (MVLIRVLANLLVLQLSYA). Residues 19–24 (QKSSEL) constitute a propeptide that is removed on maturation. Residues 25 to 251 (VVGGDECDIN…YTDWIQSIIA (227 aa)) enclose the Peptidase S1 domain. Cystine bridges form between Cys31/Cys165, Cys52/Cys68, Cys100/Cys258, Cys144/Cys212, Cys176/Cys191, and Cys202/Cys227. Active-site charge relay system residues include His67 and Asp112. Ser206 serves as the catalytic Charge relay system. N-linked (GlcNAc...) asparagine glycosylation occurs at Asn253.

The protein belongs to the peptidase S1 family. Snake venom subfamily. As to quaternary structure, monomer. Post-translationally, N-glycosylated. Contains 4.4% of hexoses, 4.4% of hexosamines and 3.1% of sialic acids. In terms of tissue distribution, expressed by the venom gland.

It is found in the secreted. The enzyme catalyses Fully activates human clotting factor V by a single cleavage at the 1545-Trp-Tyr-Leu-Arg-|-Ser-Asn-Asn-Gly-1552 bond. Cattle, but not rabbit, factor V is cleaved, and no other proteins of the clotting system are attacked. Esterase activity is observed on Bz-Arg-OEt and Tos-Arg-OMe, and amidase activity on Phe-pipecolyl-Arg-NHPhNO2.. Inhibited by D-Phe-Pro-Arg-chloromethyl ketone (FPRCK) (98%), PMSF (93%), benzamidine (67%), and diisopropylfluorophosphate (DFP). Is not inhibited by BPTI, antithrombin and EDTA. Venom serine protease that converts factor V (F5) to the active form Va in the presence of calcium ions and phospholipids. It cleaves the Arg(1545)-Ser(1546) linkage in the human factor V molecule. Has hydrolytic activities against BAEE (1.2 U/mg), TAME, and Pro-Phe-Arg-MCA (4.9 U/mg). Shows coagulant activity. This is Factor V activator from Macrovipera lebetinus (Levantine viper).